Here is a 209-residue protein sequence, read N- to C-terminus: tRNA(Phe) 7-((3-amino-3-carboxypropyl)-4-demethylwyosine(37)-N(4))-methyltransferase (209 aa).

Belongs to the TYW3 family.

It carries out the reaction 4-demethyl-7-[(3S)-3-amino-3-carboxypropyl]wyosine(37) in tRNA(Phe) + S-adenosyl-L-methionine = 7-[(3S)-3-amino-3-carboxypropyl]wyosine(37) in tRNA(Phe) + S-adenosyl-L-homocysteine + H(+). S-adenosyl-L-methionine-dependent methyltransferase that acts as a component of the wyosine derivatives biosynthesis pathway. Probably methylates N-4 position of wybutosine-86 to produce wybutosine-72. This is tRNA(Phe) 7-((3-amino-3-carboxypropyl)-4-demethylwyosine(37)-N(4))-methyltransferase from Saccharolobus solfataricus (strain ATCC 35092 / DSM 1617 / JCM 11322 / P2) (Sulfolobus solfataricus).